The chain runs to 535 residues: MVNIILLIVSALIGLILGYALISIRLKSAKEAAELTLLNAEQEAVDIRGKAEVDAEHIKKTAKRESKANRKELLLEAKEEARKYREEIEQEFKSERQELKQLETRLAERSLTLDRKDENLSSKEKVLDSKEQSLTDKSKHIDERQLQVEKLEEEKKAELEKVAAMTIAEAREVILMETENKLTHEIATRIRDAERDIKDRTVKTAKDLLAQAMQRLAGEYVTEQTITSVHLPDDNMKGRIIGREGRNIRTLESLTGIDVIIDDTPEVVILSGFDPIRREIARMTLESLIADGRIHPARIEELVEKNRLEMDNRIREYGEAAAYEIGAPNLHPDLIKIMGRLQFRTSFGQNVLRHSVEVGKLAGILAGELGENVALARRAGFLHDMGKAIDREVEGSHVEIGMEFARKYKEHPVVVNTIASHHGDVEPDSVIAVLVAAADALSSARPGARNESMENYIKRLRDLEEIATSFDGVQNSFALQAGREIRIMVQPEKISDDQVVILSHKVREKIENNLDYPGNIKVTVIREMRAVDYAK.

A helical transmembrane segment spans residues 4–24 (IILLIVSALIGLILGYALISI). Positions 118-141 (ENLSSKEKVLDSKEQSLTDKSKHI) are disordered. Residues 225 to 285 (TITSVHLPDD…IRREIARMTL (61 aa)) enclose the KH domain. The 94-residue stretch at 351 to 444 (VLRHSVEVGK…VAAADALSSA (94 aa)) folds into the HD domain.

It belongs to the RNase Y family.

The protein resides in the cell membrane. Functionally, endoribonuclease that initiates mRNA decay. This chain is Ribonuclease Y, found in Streptococcus pyogenes serotype M1.